We begin with the raw amino-acid sequence, 240 residues long: 1-(5-phosphoribosyl)-5-[(5-phosphoribosylamino)methylideneamino] imidazole-4-carboxamide isomerase (240 aa).

Catalysis depends on D8, which acts as the Proton acceptor. D129 serves as the catalytic Proton donor.

Belongs to the HisA/HisF family.

It is found in the cytoplasm. It catalyses the reaction 1-(5-phospho-beta-D-ribosyl)-5-[(5-phospho-beta-D-ribosylamino)methylideneamino]imidazole-4-carboxamide = 5-[(5-phospho-1-deoxy-D-ribulos-1-ylimino)methylamino]-1-(5-phospho-beta-D-ribosyl)imidazole-4-carboxamide. The protein operates within amino-acid biosynthesis; L-histidine biosynthesis; L-histidine from 5-phospho-alpha-D-ribose 1-diphosphate: step 4/9. This is 1-(5-phosphoribosyl)-5-[(5-phosphoribosylamino)methylideneamino] imidazole-4-carboxamide isomerase from Caldanaerobacter subterraneus subsp. tengcongensis (strain DSM 15242 / JCM 11007 / NBRC 100824 / MB4) (Thermoanaerobacter tengcongensis).